Consider the following 158-residue polypeptide: MKVLGIDPGSRYCGYAIVEKINNKNQLIEAGLIKIKPNDLQYQITELCEGLDLIFKNHQFDEVAIEDIFFAYNPKTVLKLAQFRGALSLKILQMHGEFAEYTPLQVKKTVTGKAKATKEQVAFMVKRLLGISKDIKPLDITDAIAVALTHSANLRVKK.

Residues Asp7, Glu66, and Asp139 contribute to the active site. Mg(2+)-binding residues include Asp7, Glu66, and Asp139.

It belongs to the RuvC family. As to quaternary structure, homodimer which binds Holliday junction (HJ) DNA. The HJ becomes 2-fold symmetrical on binding to RuvC with unstacked arms; it has a different conformation from HJ DNA in complex with RuvA. In the full resolvosome a probable DNA-RuvA(4)-RuvB(12)-RuvC(2) complex forms which resolves the HJ. Mg(2+) is required as a cofactor.

The protein resides in the cytoplasm. It carries out the reaction Endonucleolytic cleavage at a junction such as a reciprocal single-stranded crossover between two homologous DNA duplexes (Holliday junction).. Its function is as follows. The RuvA-RuvB-RuvC complex processes Holliday junction (HJ) DNA during genetic recombination and DNA repair. Endonuclease that resolves HJ intermediates. Cleaves cruciform DNA by making single-stranded nicks across the HJ at symmetrical positions within the homologous arms, yielding a 5'-phosphate and a 3'-hydroxyl group; requires a central core of homology in the junction. The consensus cleavage sequence is 5'-(A/T)TT(C/G)-3'. Cleavage occurs on the 3'-side of the TT dinucleotide at the point of strand exchange. HJ branch migration catalyzed by RuvA-RuvB allows RuvC to scan DNA until it finds its consensus sequence, where it cleaves and resolves the cruciform DNA. This chain is Crossover junction endodeoxyribonuclease RuvC, found in Campylobacter lari (strain RM2100 / D67 / ATCC BAA-1060).